Consider the following 876-residue polypeptide: Alanine--tRNA ligase (876 aa).

Zn(2+) is bound by residues H568, H572, C670, and H674.

Belongs to the class-II aminoacyl-tRNA synthetase family. Zn(2+) serves as cofactor.

It localises to the cytoplasm. It carries out the reaction tRNA(Ala) + L-alanine + ATP = L-alanyl-tRNA(Ala) + AMP + diphosphate. Its function is as follows. Catalyzes the attachment of alanine to tRNA(Ala) in a two-step reaction: alanine is first activated by ATP to form Ala-AMP and then transferred to the acceptor end of tRNA(Ala). Also edits incorrectly charged Ser-tRNA(Ala) and Gly-tRNA(Ala) via its editing domain. This chain is Alanine--tRNA ligase, found in Geobacter metallireducens (strain ATCC 53774 / DSM 7210 / GS-15).